Reading from the N-terminus, the 104-residue chain is ATP-dependent Clp protease adapter protein ClpS (104 aa).

It belongs to the ClpS family. As to quaternary structure, binds to the N-terminal domain of the chaperone ClpA.

Involved in the modulation of the specificity of the ClpAP-mediated ATP-dependent protein degradation. This Bordetella avium (strain 197N) protein is ATP-dependent Clp protease adapter protein ClpS.